The sequence spans 89 residues: Small ribosomal subunit protein uS15 (89 aa).

This sequence belongs to the universal ribosomal protein uS15 family. As to quaternary structure, part of the 30S ribosomal subunit. Forms a bridge to the 50S subunit in the 70S ribosome, contacting the 23S rRNA.

In terms of biological role, one of the primary rRNA binding proteins, it binds directly to 16S rRNA where it helps nucleate assembly of the platform of the 30S subunit by binding and bridging several RNA helices of the 16S rRNA. Forms an intersubunit bridge (bridge B4) with the 23S rRNA of the 50S subunit in the ribosome. The sequence is that of Small ribosomal subunit protein uS15 from Methylorubrum extorquens (strain CM4 / NCIMB 13688) (Methylobacterium extorquens).